The following is a 92-amino-acid chain: C-C motif chemokine 3 (92 aa).

The signal sequence occupies residues 1 to 19; that stretch reads MKVPGAALAVLLCTMSLCS. 2 disulfide bridges follow: Cys33/Cys57 and Cys34/Cys73.

Belongs to the intercrine beta (chemokine CC) family. As to quaternary structure, self-associates. Also heterodimer of MIP-1-alpha(4-69) and MIP-1-beta(3-69). Interacts with CCR1.

Its subcellular location is the secreted. In terms of biological role, monokine with inflammatory and chemokinetic properties. Binds to CCR1, CCR4 and CCR5. One of the major HIV-suppressive factors produced by CD8+ T-cells. Recombinant MIP-1-alpha induces a dose-dependent inhibition of different strains of HIV-1, HIV-2, and simian immunodeficiency virus (SIV). This is C-C motif chemokine 3 (CCL3) from Canis lupus familiaris (Dog).